The chain runs to 283 residues: E3 ubiquitin-protein ligase SGR9, amyloplastic (283 aa).

An amyloplast-targeting transit peptide spans 1-32; sequence MEDENTTIIMASLSALSPSHLTNLTHSILSIS. An RING-type; atypical zinc finger spans residues 214–255; that stretch reads CVICKEEMSEGRDVCEMPCQHFFHWKCILPWLSKKNTCPFCR.

In terms of processing, auto-ubiquitinated as part of the enzymatic reaction. As to expression, expressed in seedlings, hypocotyls, roots and stems. Present especially in hypocotyl and inflorescence endodermis, as well as in root cap columella, tissues that act as statocytes.

It localises to the plastid. It is found in the amyloplast. The catalysed reaction is S-ubiquitinyl-[E2 ubiquitin-conjugating enzyme]-L-cysteine + [acceptor protein]-L-lysine = [E2 ubiquitin-conjugating enzyme]-L-cysteine + N(6)-ubiquitinyl-[acceptor protein]-L-lysine.. It participates in protein modification; protein ubiquitination. Its function is as follows. E3 ubiquitin-protein ligase which accepts ubiquitin from an E2 ubiquitin-conjugating enzyme in the form of a thioester and then directly transfers the ubiquitin to targeted substrates. Modulates amyloplast dynamics and sedimentation in statocytes during inflorescence, hypocotyl and root gravitropism, probably by regulating amyloplast interaction with actin filaments (AFs) in endodermal cells. This chain is E3 ubiquitin-protein ligase SGR9, amyloplastic (SGR9), found in Arabidopsis thaliana (Mouse-ear cress).